Here is a 711-residue protein sequence, read N- to C-terminus: GDNF-inducible zinc finger protein 1 (711 aa).

One can recognise a BTB domain in the interval 31–103 (CDVTVSVEYQ…VYTAKVQVEE (73 aa)). Residues 153–168 (SGSQVSAAPAPRASVA) show a composition bias toward low complexity. Disordered regions lie at residues 153–220 (SGSQ…PKIR) and 243–312 (RLRE…EGEK). Basic and acidic residues-rich tracts occupy residues 197-212 (PPKK…KEVV), 243-252 (RLREQQKTAE), and 265-277 (SPDR…EQVS). Acidic residues predominate over residues 298–309 (EEEEEEEEEDEE). 10 C2H2-type zinc fingers span residues 317 to 340 (FKCS…KHRH), 348 to 371 (YRCD…RHVH), 377 to 400 (FPCE…LQVH), 407 to 429 (HRCG…ERTH), 435 to 457 (YGCT…MRIH), 463 to 485 (FVCD…KRCH), 491 to 513 (FMCE…NRIH), 519 to 541 (FKCE…IKVH), 547 to 569 (YCCD…RRIH), and 575 to 597 (FMCN…TSIH). The residue at position 613 (Ser613) is a Phosphoserine.

It belongs to the krueppel C2H2-type zinc-finger protein family. Interacts with NCL. Expressed in adult brain, heart, skeletal muscle, kidney and liver. Also detected in fetal brain and kidney, and at lower levels in fetal lung and liver.

The protein resides in the cytoplasm. It is found in the nucleus. The protein localises to the nucleoplasm. Its subcellular location is the nucleolus. Transcriptional repressor that binds the GZF1 responsive element (GRE) (consensus: 5'-TGCGCN[TG][CA]TATA-3'). May be regulating VSX2/HOX10 expression. This chain is GDNF-inducible zinc finger protein 1, found in Homo sapiens (Human).